Reading from the N-terminus, the 425-residue chain is 2-methylserine hydroxymethyltransferase (425 aa).

Residues leucine 126 and 130-132 (GHL) contribute to the (6S)-5,6,7,8-tetrahydrofolate site. Position 235 is an N6-(pyridoxal phosphate)lysine (lysine 235). Glutamate 251 contacts (6S)-5,6,7,8-tetrahydrofolate.

Belongs to the SHMT family. Homodimer. Pyridoxal 5'-phosphate serves as cofactor.

It localises to the cytoplasm. It carries out the reaction (6R)-5,10-methylene-5,6,7,8-tetrahydrofolate + D-alanine + H2O = 2-methylserine + (6S)-5,6,7,8-tetrahydrofolate. It participates in one-carbon metabolism; tetrahydrofolate interconversion. Functionally, catalyzes the reversible interconversion of alpha-methyl-L-serine to D-alanine with tetrahydrofolate (THF) serving as the one-carbon carrier. Cannot use alpha-methyl-D-serine, L-serine, D-serine or L-alanine. The polypeptide is 2-methylserine hydroxymethyltransferase (Ensifer sp).